The chain runs to 1392 residues: Leucine-rich PPR motif-containing protein, mitochondrial (1392 aa).

Residues 1 to 59 (MAALLRPARWLLGAAAAPRLPLSLRLPAGVPGRLSSVVRVAAVGSRPAAGERLSQARLY) constitute a mitochondrion transit peptide. 14 PPR repeats span residues 125-159 (LLRS…GVVY), 160-194 (DVSH…NIQP), 195-229 (NRVT…DLPI), 230-264 (TEAV…GIEP), 265-299 (GPDT…DHYF), 300-334 (MDRD…RRSI), 402-436 (HSSS…GFPI), 437-471 (RPHY…GVDP), 677-708 (VGSA…ESDM), 709-745 (VIGG…SAIL), 746-783 (DTAK…IKDA), 784-820 (TVLS…AKPS), 821-856 (SNIS…VLPR), and 953-987 (RDQM…NIIP). N6-acetyllysine occurs at positions 151, 186, and 225. Lys291 bears the N6-acetyllysine mark. Lys462 bears the N6-acetyllysine mark. Lys749 bears the N6-acetyllysine mark. Positions 931-1050 (ASNQVEALEK…NCKLKKSKDA (120 aa)) are RNA-binding. Phosphoserine is present on residues Ser1025, Ser1026, and Ser1028. 6 PPR repeats span residues 1030–1064 (GEDV…NVVF), 1065–1101 (SSET…GFTL), 1102–1136 (NDAA…KQVP), 1137–1175 (SQIA…LSKM), 1176–1210 (VFIN…QAIE), and 1315–1349 (NDKV…NLKL). Ser1137 is subject to Phosphoserine.

Component of mRNP complexes associated with HNRPA1. Component of the complex, at least composed of LRPPRC, BECN1 and BCL2; the interactions prevent BECN1 from forming an autophagy-inducing complex with PIK3C3. Interacts with CECR2, HEBP2, MAP1S and UXT. Interacts with PPARGC1A. Interacts with FOXO1. Interacts (via N-terminus) with EIF4E; the interaction promotes association of EIF4E with 4ESE-containing mRNAs. Interacts with exportin XPO1/CRM1; interacts both alone and in complex with EIF4E and 4ESE-containing mRNAs to form an EIF4E-dependent mRNA export complex. Interacts with importin IPO8; the interaction occurs when LRPPRC is in its RNA-free form and returns LRPPRC to the nucleus for further export rounds. Interacts with BECN1. Strongly expressed in heart, liver and kidney. Weakly expressed in brain, skeletal muscle and testes.

The protein localises to the mitochondrion. The protein resides in the nucleus. It is found in the nucleoplasm. Its subcellular location is the nucleus inner membrane. It localises to the nucleus outer membrane. May play a role in RNA metabolism in both nuclei and mitochondria. In the nucleus binds to HNRPA1-associated poly(A) mRNAs and is part of nmRNP complexes at late stages of mRNA maturation which are possibly associated with nuclear mRNA export. Positively modulates nuclear export of mRNAs containing the EIF4E sensitivity element (4ESE) by binding simultaneously to both EIF4E and the 4ESE and acting as a platform for assembly for the RNA export complex. Also binds to exportin XPO1/CRM1 to engage the nuclear pore and traffic the bound mRNAs to the cytoplasm. May bind mature mRNA in the nucleus outer membrane. In mitochondria binds to poly(A) mRNA. Plays a role in translation or stability of mitochondrially encoded cytochrome c oxidase (COX) subunits. May be involved in transcription regulation. Cooperates with PPARGC1A to regulate certain mitochondrially encoded genes and gluconeogenic genes and may regulate docking of PPARGC1A to transcription factors. Seems to be involved in the transcription regulation of the multidrug-related genes MDR1 and MVP. Part of a nuclear factor that binds to the invMED1 element of MDR1 and MVP gene promoters. Binds single-stranded DNA. Required for maintaining mitochondrial potential. Suppresses the initiation of basal levels of autophagy and mitophagy by sustaining BCL2 levels. The protein is Leucine-rich PPR motif-containing protein, mitochondrial (Lrpprc) of Mus musculus (Mouse).